The primary structure comprises 401 residues: Calcium-responsive transcription coactivator (401 aa).

Residues 1–148 (MSVAFASARP…TLPTTSMSMS (148 aa)) form an N-terminal auto-inhibitory domain; necessary for interaction with SMARCA4/BRG1 region. The short motif at 50-53 (YQQI) is the SH2-binding element. Disordered regions lie at residues 72 to 171 (QSLL…VPMQ) and 214 to 401 (TRAR…NYQQ). Residues 85–106 (LGPGALSQSGSSQGLHPQGSLS) are compositionally biased toward low complexity. Residues 128–137 (NHVSMQQTAQ) show a composition bias toward polar residues. The segment covering 138–149 (STLPTTSMSMSG) has biased composition (low complexity). The tract at residues 149–237 (GSGHGTGPGY…GGSMMGQRPM (89 aa)) is methionine-rich intra-molecular domain. The segment at 251 to 322 (YLGQEEYYSE…SQYSQQQAGY (72 aa)) is MFD domain. Polar residues-rich tracts occupy residues 260–276 (EQYSHSQGSAEPMSQQY) and 285–294 (AYQQSSYTEQ). A compositionally biased stretch (basic and acidic residues) spans 295 to 304 (SYDRSFEDPT). Residues 310–374 (GGNSQYSQQQ…QGQGQQYGSY (65 aa)) are compositionally biased toward low complexity. Residues 339–401 (NQQSYPGQQQ…EQGQYGNYQQ (63 aa)) are necessary for nuclear localization. An SH2-binding motif is present at residues 358–361 (SQYS). Polar residues predominate over residues 375–387 (RTSQTGPSAQQQR). An SH3-binding motif is present at residues 376–384 (TSQTGPSAQ). The segment covering 389-401 (YGYEQGQYGNYQQ) has biased composition (low complexity). The interval 392–401 (EQGQYGNYQQ) is necessary for interaction with CREBBP and for the recruitment of CREBBP to the nuclear bodies. An SH2-binding motif is present at residues 396–399 (YGNY).

The protein belongs to the SS18 family. As to quaternary structure, homodimer. Dimerization may be necessary for its function in neuronal dendritic development. Interacts (via C-terminus) with CREBBP (via N-terminus), EP300 and SMARCA4/BRG1. Interacts with the nBAF complex. Association with CREBBP facilitates transcription while the association with SMARCA4/BRG1 suppresses CREST-mediated transcription in resting neurons. As to expression, brain (at protein level). Also found in the heart, liver, kidney and testis.

The protein resides in the nucleus. Its subcellular location is the chromosome. It localises to the centromere. The protein localises to the kinetochore. Its function is as follows. Transcriptional activator which is required for calcium-dependent dendritic growth and branching in cortical neurons. Recruits CREB-binding protein (CREBBP) to nuclear bodies. Component of the CREST-BRG1 complex, a multiprotein complex that regulates promoter activation by orchestrating a calcium-dependent release of a repressor complex and a recruitment of an activator complex. In resting neurons, transcription of the c-FOS promoter is inhibited by BRG1-dependent recruitment of a phospho-RB1-HDAC1 repressor complex. Upon calcium influx, RB1 is dephosphorylated by calcineurin, which leads to release of the repressor complex. At the same time, there is increased recruitment of CREBBP to the promoter by a CREST-dependent mechanism, which leads to transcriptional activation. The CREST-BRG1 complex also binds to the NR2B promoter, and activity-dependent induction of NR2B expression involves a release of HDAC1 and recruitment of CREBBP. The polypeptide is Calcium-responsive transcription coactivator (Ss18l1) (Rattus norvegicus (Rat)).